The chain runs to 704 residues: UvrABC system protein C (704 aa).

A disordered region spans residues 1-77 (MIHDPAEPPA…PAQAGAGPMA (77 aa)). A compositionally biased stretch (acidic residues) spans 49–66 (VEEDDEARLPEVEDEPEA). Over residues 67 to 77 (EPAQAGAGPMA) the composition is skewed to low complexity. Positions 92-170 (TSPGVYRMLN…IKQLRPRFNV (79 aa)) constitute a GIY-YIG domain. One can recognise a UVR domain in the interval 280 to 315 (RAVKELLAAEMEKASGELEFETAALYRDRLAALSAI).

Belongs to the UvrC family. In terms of assembly, interacts with UvrB in an incision complex.

It is found in the cytoplasm. In terms of biological role, the UvrABC repair system catalyzes the recognition and processing of DNA lesions. UvrC both incises the 5' and 3' sides of the lesion. The N-terminal half is responsible for the 3' incision and the C-terminal half is responsible for the 5' incision. In Rhodopseudomonas palustris (strain ATCC BAA-98 / CGA009), this protein is UvrABC system protein C.